Reading from the N-terminus, the 317-residue chain is Glutathione synthetase (317 aa).

One can recognise an ATP-grasp domain in the interval 125-311; it reads EKMFATLFPQ…IGGKLMDAID (187 aa). Residue 152–208 participates in ATP binding; that stretch reads TAKHADVILKPLDGMGGTSIFRHRAGDPNLSVILETLTALGTQQIMAQAYLPAIKDG. Residues Glu-282 and Asn-284 each contribute to the Mg(2+) site.

The protein belongs to the prokaryotic GSH synthase family. Mg(2+) is required as a cofactor. Requires Mn(2+) as cofactor.

It carries out the reaction gamma-L-glutamyl-L-cysteine + glycine + ATP = glutathione + ADP + phosphate + H(+). The protein operates within sulfur metabolism; glutathione biosynthesis; glutathione from L-cysteine and L-glutamate: step 2/2. In Pseudomonas putida (strain ATCC 47054 / DSM 6125 / CFBP 8728 / NCIMB 11950 / KT2440), this protein is Glutathione synthetase.